The chain runs to 191 residues: Recombination protein RecR (191 aa).

The C4-type zinc-finger motif lies at 56-71 (CQNCNFLQSNNICHFC). In terms of domain architecture, Toprim spans 78–170 (KQLMIFETTS…KVTKLAQGLP (93 aa)).

The protein belongs to the RecR family.

Its function is as follows. May play a role in DNA repair. It seems to be involved in an RecBC-independent recombinational process of DNA repair. It may act with RecF and RecO. In Mycoplasmopsis pulmonis (strain UAB CTIP) (Mycoplasma pulmonis), this protein is Recombination protein RecR.